A 127-amino-acid chain; its full sequence is Large ribosomal subunit protein bL19 (127 aa).

It belongs to the bacterial ribosomal protein bL19 family.

Functionally, this protein is located at the 30S-50S ribosomal subunit interface and may play a role in the structure and function of the aminoacyl-tRNA binding site. The chain is Large ribosomal subunit protein bL19 from Myxococcus xanthus (strain DK1622).